A 261-amino-acid chain; its full sequence is DNA repair protein RecO (261 aa).

This sequence belongs to the RecO family.

Its function is as follows. Involved in DNA repair and RecF pathway recombination. The sequence is that of DNA repair protein RecO from Limosilactobacillus reuteri (strain DSM 20016) (Lactobacillus reuteri).